Consider the following 134-residue polypeptide: MSWQSYVDDHLMCDIEGHEGHRLTAAAIVGHDGSVWAQSATFPQFKPEEMNGIMTDFNAPGHLVPTGLHLGGTKYMVIQGEAGAVIRGKKGSGGITIKKTGQALVFGIYEEPVTPGQCNMVVERLGDYLLEQGL.

Cysteines 13 and 118 form a disulfide. Positions 84–100 (AVIRGKKGSGGITIKKT) match the Involved in PIP2 interaction motif. Phosphothreonine is present on Thr114.

The protein belongs to the profilin family. Occurs in many kinds of cells as a complex with monomeric actin in a 1:1 ratio. Phosphorylated by MAP kinases.

The protein localises to the cytoplasm. It localises to the cytoskeleton. Its function is as follows. Binds to actin and affects the structure of the cytoskeleton. At high concentrations, profilin prevents the polymerization of actin, whereas it enhances it at low concentrations. The chain is Profilin-4 from Olea europaea (Common olive).